A 148-amino-acid chain; its full sequence is D-aminoacyl-tRNA deacylase (148 aa).

The Gly-cisPro motif, important for rejection of L-amino acids motif lies at 137–138 (GP).

It belongs to the DTD family. As to quaternary structure, homodimer.

It localises to the cytoplasm. The enzyme catalyses glycyl-tRNA(Ala) + H2O = tRNA(Ala) + glycine + H(+). It carries out the reaction a D-aminoacyl-tRNA + H2O = a tRNA + a D-alpha-amino acid + H(+). Its function is as follows. An aminoacyl-tRNA editing enzyme that deacylates mischarged D-aminoacyl-tRNAs. Also deacylates mischarged glycyl-tRNA(Ala), protecting cells against glycine mischarging by AlaRS. Acts via tRNA-based rather than protein-based catalysis; rejects L-amino acids rather than detecting D-amino acids in the active site. By recycling D-aminoacyl-tRNA to D-amino acids and free tRNA molecules, this enzyme counteracts the toxicity associated with the formation of D-aminoacyl-tRNA entities in vivo and helps enforce protein L-homochirality. The chain is D-aminoacyl-tRNA deacylase from Latilactobacillus sakei subsp. sakei (strain 23K) (Lactobacillus sakei subsp. sakei).